Here is a 474-residue protein sequence, read N- to C-terminus: 3-isopropylmalate dehydratase large subunit (474 aa).

3 residues coordinate [4Fe-4S] cluster: Cys352, Cys413, and Cys416.

Belongs to the aconitase/IPM isomerase family. LeuC type 1 subfamily. As to quaternary structure, heterodimer of LeuC and LeuD. It depends on [4Fe-4S] cluster as a cofactor.

The enzyme catalyses (2R,3S)-3-isopropylmalate = (2S)-2-isopropylmalate. Its pathway is amino-acid biosynthesis; L-leucine biosynthesis; L-leucine from 3-methyl-2-oxobutanoate: step 2/4. In terms of biological role, catalyzes the isomerization between 2-isopropylmalate and 3-isopropylmalate, via the formation of 2-isopropylmaleate. This Pseudomonas syringae pv. syringae (strain B728a) protein is 3-isopropylmalate dehydratase large subunit.